Here is a 218-residue protein sequence, read N- to C-terminus: DNA endonuclease I-ChuI (218 aa).

This sequence belongs to the LAGLIDADG endonuclease family.

It is found in the plastid. The protein resides in the chloroplast. Its function is as follows. Probable endonuclease involved in intron homing. Encoded in the group-I intron of the subunit rRNA-encoding gene (rrnL), it generates a staggered cut with 4-nt (CTCG) 3'-OH overhangs 2 bp downstream from the intron insertion site. In Chlamydomonas applanata (Chlamydomonas humicola), this protein is DNA endonuclease I-ChuI.